A 265-amino-acid chain; its full sequence is Shikimate dehydrogenase (NADP(+)) (265 aa).

Shikimate is bound by residues 15–17 (SKS) and Thr62. Lys66 functions as the Proton acceptor in the catalytic mechanism. Shikimate is bound by residues Asn87 and Asp102. Residues 127 to 131 (GAGGA), 151 to 156 (NRTVSR), and Met212 each bind NADP(+). Residue Tyr214 coordinates shikimate. Residue Gly234 participates in NADP(+) binding.

This sequence belongs to the shikimate dehydrogenase family. Homodimer.

The enzyme catalyses shikimate + NADP(+) = 3-dehydroshikimate + NADPH + H(+). It participates in metabolic intermediate biosynthesis; chorismate biosynthesis; chorismate from D-erythrose 4-phosphate and phosphoenolpyruvate: step 4/7. Involved in the biosynthesis of the chorismate, which leads to the biosynthesis of aromatic amino acids. Catalyzes the reversible NADPH linked reduction of 3-dehydroshikimate (DHSA) to yield shikimate (SA). In Thiobacillus denitrificans (strain ATCC 25259 / T1), this protein is Shikimate dehydrogenase (NADP(+)).